We begin with the raw amino-acid sequence, 209 residues long: Uracil phosphoribosyltransferase (209 aa).

Residues Arg-79, Arg-104, and 131-139 (DPMLATGGS) contribute to the 5-phospho-alpha-D-ribose 1-diphosphate site. Uracil-binding positions include Ile-194 and 199-201 (GDA). Residue Asp-200 participates in 5-phospho-alpha-D-ribose 1-diphosphate binding.

Belongs to the UPRTase family. Requires Mg(2+) as cofactor.

The enzyme catalyses UMP + diphosphate = 5-phospho-alpha-D-ribose 1-diphosphate + uracil. It functions in the pathway pyrimidine metabolism; UMP biosynthesis via salvage pathway; UMP from uracil: step 1/1. Its activity is regulated as follows. Allosterically activated by GTP. Its function is as follows. Catalyzes the conversion of uracil and 5-phospho-alpha-D-ribose 1-diphosphate (PRPP) to UMP and diphosphate. This is Uracil phosphoribosyltransferase from Symbiobacterium thermophilum (strain DSM 24528 / JCM 14929 / IAM 14863 / T).